The following is a 528-amino-acid chain: Protein arginine N-methyltransferase 3 (528 aa).

The interval 1 to 42 is disordered; that stretch reads MCSLAAGNGQGAELGPEPLELSDSGDDAGWEDEDADAEPAQG. An N-acetylcysteine modification is found at Cys-2. Residues Ser-22 and Ser-24 each carry the phosphoserine modification. Positions 23–37 are enriched in acidic residues; the sequence is DSGDDAGWEDEDADA. The segment at 46–69 adopts a C2H2-type zinc-finger fold; sequence TPCLFCDRLFRSAEETFSHCKLEH. Position 169 is a phosphoserine (Ser-169). Residues 184–528 form a mediates interaction with ALDH1A1 region; the sequence is MKQFAQDFVM…NSSTQTYSLQ (345 aa). An SAM-dependent MTase PRMT-type domain is found at 214-528; that stretch reads DGVYFSSYGH…NSSTQTYSLQ (315 aa). S-adenosyl-L-homocysteine-binding residues include Arg-236, Gly-260, Asp-282, Ser-284, Ile-310, and Glu-311. Residues Glu-326 and Glu-335 contribute to the active site.

Belongs to the class I-like SAM-binding methyltransferase superfamily. Protein arginine N-methyltransferase family. In terms of assembly, monomer and homodimer. Interacts with EPB41L3 (via FERM domain); the interaction is direct and inhibits the protein-arginine N-methyltransferase activity of PRMT3. Interacts with the 40S ribosomal protein RPS2. Interacts with ALDH1A1; the interaction is direct, inhibits ALDH1A1 aldehyde dehydrogenase activity and is independent of the methyltransferase activity of PRMT3. In terms of tissue distribution, ubiquitously expressed.

Its subcellular location is the cytoplasm. It localises to the cytosol. It is found in the nucleus. The catalysed reaction is L-arginyl-[protein] + S-adenosyl-L-methionine = N(omega)-methyl-L-arginyl-[protein] + S-adenosyl-L-homocysteine + H(+). The enzyme catalyses L-arginyl-[protein] + 2 S-adenosyl-L-methionine = N(omega),N(omega)-dimethyl-L-arginyl-[protein] + 2 S-adenosyl-L-homocysteine + 2 H(+). Its activity is regulated as follows. Inhibited by N-ethylmaleimide and high concentrations of zinc chloride. Functionally, protein-arginine N-methyltransferase that catalyzes both the monomethylation and asymmetric dimethylation of the guanidino nitrogens of arginine residues in target proteins, and therefore falls into the group of type I methyltransferases. Catalyzes the asymmetric arginine dimethylation at multiple sites in the Arg/Gly-rich region of small ribosomal subunit protein uS5/RPS2. Also appears to methylate other ribosomal proteins. May regulate retinoic acid synthesis and signaling by inhibiting ALDH1A1 retinal dehydrogenase activity. Contributes to methylation of histone H4 'Arg-3', a specific tag for epigenetic transcriptional activation. Promotes osteogenesis. In Rattus norvegicus (Rat), this protein is Protein arginine N-methyltransferase 3.